Consider the following 111-residue polypeptide: Probable 4-amino-4-deoxy-L-arabinose-phosphoundecaprenol flippase subunit ArnE (111 aa).

At 1–35 (MIWLTLVFASLLSVAGQLCQKQATCFVAINKRRKH) the chain is on the cytoplasmic side. The chain crosses the membrane as a helical span at residues 36–56 (IVLWLGLALACLGLAMVLWLL). In terms of domain architecture, EamA spans 40-109 (LGLALACLGL…IIGGIVILGS (70 aa)). Residues 57–60 (VLQN) lie on the Periplasmic side of the membrane. Residues 61–81 (VPVGIAYPMLSLNFVWVTLAA) form a helical membrane-spanning segment. Residues 82–87 (VKLWHE) lie on the Cytoplasmic side of the membrane. The helical transmembrane segment at 88-108 (PVSPRHWCGVAFIIGGIVILG) threads the bilayer. Residues 109–111 (STV) lie on the Periplasmic side of the membrane.

This sequence belongs to the ArnE family. As to quaternary structure, heterodimer of ArnE and ArnF.

The protein resides in the cell inner membrane. It participates in bacterial outer membrane biogenesis; lipopolysaccharide biosynthesis. Translocates 4-amino-4-deoxy-L-arabinose-phosphoundecaprenol (alpha-L-Ara4N-phosphoundecaprenol) from the cytoplasmic to the periplasmic side of the inner membrane. The chain is Probable 4-amino-4-deoxy-L-arabinose-phosphoundecaprenol flippase subunit ArnE from Escherichia coli (strain ATCC 8739 / DSM 1576 / NBRC 3972 / NCIMB 8545 / WDCM 00012 / Crooks).